The sequence spans 523 residues: UDP-N-acetylmuramyl-tripeptide synthetase (523 aa).

Ser38 contacts UDP-N-acetyl-alpha-D-muramoyl-L-alanyl-D-glutamate. 116 to 122 (GTKGKTT) lines the ATP pocket. Residues 162 to 163 (TT), Ser189, and Arg197 each bind UDP-N-acetyl-alpha-D-muramoyl-L-alanyl-D-glutamate. Lys231 carries the post-translational modification N6-carboxylysine.

Belongs to the MurCDEF family. MurE subfamily. Carboxylation is probably crucial for Mg(2+) binding and, consequently, for the gamma-phosphate positioning of ATP.

It localises to the cytoplasm. It participates in cell wall biogenesis; peptidoglycan biosynthesis. Functionally, catalyzes the addition of an amino acid to the nucleotide precursor UDP-N-acetylmuramoyl-L-alanyl-D-glutamate (UMAG) in the biosynthesis of bacterial cell-wall peptidoglycan. This is UDP-N-acetylmuramyl-tripeptide synthetase from Lactobacillus acidophilus (strain ATCC 700396 / NCK56 / N2 / NCFM).